A 548-amino-acid chain; its full sequence is T-complex protein 1 subunit theta (548 aa).

Ala2 is subject to N-acetylalanine. Ser23 is modified (phosphoserine). The residue at position 30 (Tyr30) is a Phosphotyrosine. ADP-binding residues include Tyr47 and Gly48. A Mg(2+)-binding site is contributed by Asp99. Positions 100, 101, 102, and 103 each coordinate ADP. Residues Gly100, Thr101, and Asn102 each coordinate ATP. At Ser162 the chain carries Phosphoserine. Positions 169, 170, and 171 each coordinate ADP. Positions 170 and 171 each coordinate ATP. Glycyl lysine isopeptide (Lys-Gly) (interchain with G-Cter in SUMO2) cross-links involve residues Lys224, Lys254, and Lys260. 2 positions are modified to phosphoserine: Ser269 and Ser317. Lys318 and Lys400 each carry N6-acetyllysine. Position 412 (Gly412) interacts with ADP. Gly412 contacts ATP. A Glycyl lysine isopeptide (Lys-Gly) (interchain with G-Cter in SUMO1) cross-link involves residue Lys459. At Lys466 the chain carries N6-acetyllysine. Asp499 serves as a coordination point for ADP. Positions 499 and 504 each coordinate ATP. Tyr505 is modified (phosphotyrosine). A disordered region spans residues 529 to 548 (PAGGPKPPSGKKDWDEDQND). A Glycyl lysine isopeptide (Lys-Gly) (interchain with G-Cter in SUMO2) cross-link involves residue Lys534. Ser537 is subject to Phosphoserine. Residue Lys539 forms a Glycyl lysine isopeptide (Lys-Gly) (interchain with G-Cter in SUMO2) linkage.

This sequence belongs to the TCP-1 chaperonin family. As to quaternary structure, component of the chaperonin-containing T-complex (TRiC), a hexadecamer composed of two identical back-to-back stacked rings enclosing a protein folding chamber. Each ring is made up of eight different subunits: TCP1/CCT1, CCT2, CCT3, CCT4, CCT5, CCT6A/CCT6, CCT7, CCT8. Interacts with PACRG. Interacts with DNAAF4. Interacts with synaptic plasticity regulator PANTS.

The protein localises to the cytoplasm. It localises to the cytoskeleton. It is found in the microtubule organizing center. Its subcellular location is the centrosome. The protein resides in the cilium basal body. The catalysed reaction is ATP + H2O = ADP + phosphate + H(+). Its function is as follows. Component of the chaperonin-containing T-complex (TRiC), a molecular chaperone complex that assists the folding of actin, tubulin and other proteins upon ATP hydrolysis. The TRiC complex mediates the folding of WRAP53/TCAB1, thereby regulating telomere maintenance. As part of the TRiC complex may play a role in the assembly of BBSome, a complex involved in ciliogenesis regulating transports vesicles to the cilia. The chain is T-complex protein 1 subunit theta (CCT8) from Bos taurus (Bovine).